The sequence spans 163 residues: NADH-quinone oxidoreductase subunit I (163 aa).

2 consecutive 4Fe-4S ferredoxin-type domains span residues 54 to 84 (LRRY…IESD) and 94 to 123 (TRYD…ETHI). Positions 64, 67, 70, 74, 103, 106, 109, and 113 each coordinate [4Fe-4S] cluster.

It belongs to the complex I 23 kDa subunit family. In terms of assembly, NDH-1 is composed of 14 different subunits. Subunits NuoA, H, J, K, L, M, N constitute the membrane sector of the complex. [4Fe-4S] cluster is required as a cofactor.

The protein localises to the cell inner membrane. It carries out the reaction a quinone + NADH + 5 H(+)(in) = a quinol + NAD(+) + 4 H(+)(out). NDH-1 shuttles electrons from NADH, via FMN and iron-sulfur (Fe-S) centers, to quinones in the respiratory chain. The immediate electron acceptor for the enzyme in this species is believed to be ubiquinone. Couples the redox reaction to proton translocation (for every two electrons transferred, four hydrogen ions are translocated across the cytoplasmic membrane), and thus conserves the redox energy in a proton gradient. In Cupriavidus metallidurans (strain ATCC 43123 / DSM 2839 / NBRC 102507 / CH34) (Ralstonia metallidurans), this protein is NADH-quinone oxidoreductase subunit I.